Consider the following 143-residue polypeptide: Large ribosomal subunit protein uL13 (143 aa).

The protein belongs to the universal ribosomal protein uL13 family. As to quaternary structure, part of the 50S ribosomal subunit.

Its function is as follows. This protein is one of the early assembly proteins of the 50S ribosomal subunit, although it is not seen to bind rRNA by itself. It is important during the early stages of 50S assembly. This Desulfitobacterium hafniense (strain Y51) protein is Large ribosomal subunit protein uL13.